We begin with the raw amino-acid sequence, 60 residues long: Large ribosomal subunit protein uL30 (60 aa).

The protein belongs to the universal ribosomal protein uL30 family. Part of the 50S ribosomal subunit.

This Albidiferax ferrireducens (strain ATCC BAA-621 / DSM 15236 / T118) (Rhodoferax ferrireducens) protein is Large ribosomal subunit protein uL30.